A 256-amino-acid polypeptide reads, in one-letter code: Type III pantothenate kinase (256 aa).

An ATP-binding site is contributed by aspartate 6–valine 13. Glycine 107–arginine 110 contributes to the substrate binding site. Aspartate 109 serves as the catalytic Proton acceptor. Aspartate 129 serves as a coordination point for K(+). Threonine 132 serves as a coordination point for ATP. Threonine 184 is a substrate binding site.

This sequence belongs to the type III pantothenate kinase family. Homodimer. The cofactor is NH4(+). Requires K(+) as cofactor.

Its subcellular location is the cytoplasm. It catalyses the reaction (R)-pantothenate + ATP = (R)-4'-phosphopantothenate + ADP + H(+). It participates in cofactor biosynthesis; coenzyme A biosynthesis; CoA from (R)-pantothenate: step 1/5. Catalyzes the phosphorylation of pantothenate (Pan), the first step in CoA biosynthesis. The protein is Type III pantothenate kinase of Pelotomaculum thermopropionicum (strain DSM 13744 / JCM 10971 / SI).